The following is a 60-amino-acid chain: Myrmicitoxin(1)-Pr4b (60 aa).

The signal sequence occupies residues 1-23 (MKAIIFLFAVLTVVAIIIPIISG). The propeptide occupies 24–33 (EPNAGPHAAS). Q59 carries the glutamine amide modification.

This sequence belongs to the formicidae venom clade 2 family. As to expression, expressed by the venom gland.

It localises to the secreted. Toxin that causes a rapid and irreversible paralysis when intrathoracically injected into insects (blowflies). Does not cause spontaneous nocifensive behaviors by intraplantar injection in mice. In Pogonomyrmex rugosus (Desert harvester ant), this protein is Myrmicitoxin(1)-Pr4b.